The sequence spans 189 residues: Transmembrane protein 229b (189 aa).

The Cytoplasmic segment spans residues 1-17; sequence MATTVTPEPLTALSRWY. Residues 18 to 38 traverse the membrane as a helical segment; the sequence is LYAIHGYFCEVMFTAAWEFVV. At 39 to 43 the chain is on the extracellular side; the sequence is NCNWK. Residues 44–64 traverse the membrane as a helical segment; it reads FPGVTSVWALFIYGTCILIVE. Residues 65–75 lie on the Cytoplasmic side of the membrane; sequence RMYLCLKDRCN. The helical transmembrane segment at 76–96 threads the bilayer; the sequence is VLLRCIIYTLWTYFWEFGTGF. At 97–114 the chain is on the extracellular side; that stretch reads LLRQFNACPWDYSEFKYN. Residues 115 to 135 traverse the membrane as a helical segment; the sequence is FMGLITAEYAVPWFCASFIVE. The Cytoplasmic portion of the chain corresponds to 136-189; that stretch reads RLVIRNTLRLRFDEVAESGQAEERLDRGGGGRGGRRGRGARAGATSANGYVKVD. The segment at 158 to 189 is disordered; it reads ERLDRGGGGRGGRRGRGARAGATSANGYVKVD.

Belongs to the TMEM229 family.

It localises to the membrane. This is Transmembrane protein 229b (tmem229b) from Danio rerio (Zebrafish).